The sequence spans 279 residues: Alcohol dehydrogenase-related 31 kDa protein (279 aa).

11–34 (YVADCGGIALETSKVLMTKNIAKL) contacts NAD(+). Ser-139 is a binding site for substrate. Tyr-152 acts as the Proton acceptor in catalysis.

The protein belongs to the short-chain dehydrogenases/reductases (SDR) family.

This Drosophila madeirensis (Fruit fly) protein is Alcohol dehydrogenase-related 31 kDa protein (Adhr).